The following is a 309-amino-acid chain: Metal ABC transporter substrate-binding lipoprotein FimA (309 aa).

Positions 1–20 are cleaved as a signal peptide; sequence MKKIASVLALFVALLFGLLA. The N-palmitoyl cysteine moiety is linked to residue Cys21. Cys21 is lipidated: S-diacylglycerol cysteine. Residues His67, His139, Glu205, and Asp280 each coordinate a divalent metal cation.

It belongs to the bacterial solute-binding protein 9 family. Lipoprotein receptor antigen (Lrai) subfamily.

The protein localises to the cell membrane. In terms of biological role, part of an ATP-binding cassette (ABC) transport system involved in metal import. Binds a metal with high affinity and specificity and delivers it to the membrane permease for translocation into the cytoplasm. Also acts as an adhesin which is involved on adherence to extracellular matrix. It is an important factor in pathogenesis and infection. May contribute to the formation and accumulation of dental plaque. This Streptococcus parasanguinis protein is Metal ABC transporter substrate-binding lipoprotein FimA (fimA).